The sequence spans 696 residues: Putative zinc metalloproteinase YIL108W (696 aa).

Residue Lys245 forms a Glycyl lysine isopeptide (Lys-Gly) (interchain with G-Cter in ubiquitin) linkage. His318 serves as a coordination point for Zn(2+). Residue Glu319 is part of the active site. Positions 322 and 328 each coordinate Zn(2+). Residue Ser361 is modified to Phosphoserine. Residues Lys478, Lys518, Lys579, Lys590, and Lys596 each participate in a glycyl lysine isopeptide (Lys-Gly) (interchain with G-Cter in ubiquitin) cross-link. The region spanning 522-695 (GIKSPLYGRS…VDAFGIIYGA (174 aa)) is the Jacalin-type lectin domain.

Belongs to the peptidase M10B family. It depends on Zn(2+) as a cofactor.

The protein localises to the cytoplasm. The polypeptide is Putative zinc metalloproteinase YIL108W (Saccharomyces cerevisiae (strain ATCC 204508 / S288c) (Baker's yeast)).